The primary structure comprises 138 residues: Putative ribonuclease VapC45 (138 aa).

Functionally, toxic component of a type II toxin-antitoxin (TA) system. An RNase. The cognate antitoxin is VapB45. The protein is Putative ribonuclease VapC45 of Mycobacterium tuberculosis (strain ATCC 25618 / H37Rv).